A 556-amino-acid polypeptide reads, in one-letter code: Formate--tetrahydrofolate ligase (556 aa).

An ATP-binding site is contributed by T65–T72.

The protein belongs to the formate--tetrahydrofolate ligase family.

The catalysed reaction is (6S)-5,6,7,8-tetrahydrofolate + formate + ATP = (6R)-10-formyltetrahydrofolate + ADP + phosphate. Its pathway is one-carbon metabolism; tetrahydrofolate interconversion. The sequence is that of Formate--tetrahydrofolate ligase from Lachnoclostridium phytofermentans (strain ATCC 700394 / DSM 18823 / ISDg) (Clostridium phytofermentans).